A 448-amino-acid chain; its full sequence is Bifunctional protein GlmU (448 aa).

The interval 1–232 is pyrophosphorylase; that stretch reads MTARSSLTIV…EDEVRGINTK (232 aa). Residues 11-14, Lys-25, Gln-78, and 83-84 contribute to the UDP-N-acetyl-alpha-D-glucosamine site; these read LAAG and GT. Asp-108 serves as a coordination point for Mg(2+). Positions 144, 158, 173, and 230 each coordinate UDP-N-acetyl-alpha-D-glucosamine. Residue Asn-230 coordinates Mg(2+). The interval 233–253 is linker; it reads AQLAQAEAAMQARLRQAAMDA. The N-acetyltransferase stretch occupies residues 254 to 448; sequence GVTLIAPETV…FRNAKLRQTK (195 aa). The UDP-N-acetyl-alpha-D-glucosamine site is built by Arg-319 and Lys-337. Residue His-349 is the Proton acceptor of the active site. UDP-N-acetyl-alpha-D-glucosamine-binding residues include Tyr-352 and Asn-363. Acetyl-CoA-binding positions include Ala-366, 372-373, Ser-409, and Arg-426; that span reads NY. Positions 427 to 448 are disordered; that stretch reads SPQTTKEGAAARFRNAKLRQTK.

The protein in the N-terminal section; belongs to the N-acetylglucosamine-1-phosphate uridyltransferase family. It in the C-terminal section; belongs to the transferase hexapeptide repeat family. As to quaternary structure, homotrimer. Requires Mg(2+) as cofactor.

It localises to the cytoplasm. It catalyses the reaction alpha-D-glucosamine 1-phosphate + acetyl-CoA = N-acetyl-alpha-D-glucosamine 1-phosphate + CoA + H(+). The enzyme catalyses N-acetyl-alpha-D-glucosamine 1-phosphate + UTP + H(+) = UDP-N-acetyl-alpha-D-glucosamine + diphosphate. It participates in nucleotide-sugar biosynthesis; UDP-N-acetyl-alpha-D-glucosamine biosynthesis; N-acetyl-alpha-D-glucosamine 1-phosphate from alpha-D-glucosamine 6-phosphate (route II): step 2/2. Its pathway is nucleotide-sugar biosynthesis; UDP-N-acetyl-alpha-D-glucosamine biosynthesis; UDP-N-acetyl-alpha-D-glucosamine from N-acetyl-alpha-D-glucosamine 1-phosphate: step 1/1. It functions in the pathway bacterial outer membrane biogenesis; LPS lipid A biosynthesis. In terms of biological role, catalyzes the last two sequential reactions in the de novo biosynthetic pathway for UDP-N-acetylglucosamine (UDP-GlcNAc). The C-terminal domain catalyzes the transfer of acetyl group from acetyl coenzyme A to glucosamine-1-phosphate (GlcN-1-P) to produce N-acetylglucosamine-1-phosphate (GlcNAc-1-P), which is converted into UDP-GlcNAc by the transfer of uridine 5-monophosphate (from uridine 5-triphosphate), a reaction catalyzed by the N-terminal domain. The chain is Bifunctional protein GlmU from Bradyrhizobium sp. (strain ORS 278).